The primary structure comprises 255 residues: ATP synthase subunit a (255 aa).

6 helical membrane-spanning segments follow: residues 28-48 (VDSL…FWLG), 86-106 (IAPL…MDLV), 125-145 (ILPT…FFLI), 164-184 (FHPF…IELI), 203-223 (LIFI…GTPW), and 224-244 (AIFH…LTVV).

It belongs to the ATPase A chain family. As to quaternary structure, F-type ATPases have 2 components, CF(1) - the catalytic core - and CF(0) - the membrane proton channel. CF(1) has five subunits: alpha(3), beta(3), gamma(1), delta(1), epsilon(1). CF(0) has three main subunits: a(1), b(2) and c(9-12). The alpha and beta chains form an alternating ring which encloses part of the gamma chain. CF(1) is attached to CF(0) by a central stalk formed by the gamma and epsilon chains, while a peripheral stalk is formed by the delta and b chains.

Its subcellular location is the cell inner membrane. In terms of biological role, key component of the proton channel; it plays a direct role in the translocation of protons across the membrane. This Alkalilimnicola ehrlichii (strain ATCC BAA-1101 / DSM 17681 / MLHE-1) protein is ATP synthase subunit a.